A 92-amino-acid chain; its full sequence is DNA-directed RNA polymerase subunit Rpo11 (92 aa).

It belongs to the archaeal Rpo11/eukaryotic RPB11/RPC19 RNA polymerase subunit family. Part of the RNA polymerase complex.

The protein localises to the cytoplasm. It catalyses the reaction RNA(n) + a ribonucleoside 5'-triphosphate = RNA(n+1) + diphosphate. In terms of biological role, DNA-dependent RNA polymerase (RNAP) catalyzes the transcription of DNA into RNA using the four ribonucleoside triphosphates as substrates. The polypeptide is DNA-directed RNA polymerase subunit Rpo11 (Methanosarcina barkeri (strain Fusaro / DSM 804)).